A 139-amino-acid chain; its full sequence is Probable transcription termination protein NusA (139 aa).

Residues 31 to 97 form the KH domain; sequence DDRVVYVVTA…YNVTVSENDT (67 aa).

This sequence belongs to the NusA family.

It localises to the cytoplasm. Functionally, participates in transcription termination. The sequence is that of Probable transcription termination protein NusA from Halobacterium salinarum (strain ATCC 29341 / DSM 671 / R1).